Reading from the N-terminus, the 622-residue chain is Serine/threonine-protein kinase MAK (622 aa).

The Protein kinase domain maps to 4-284; sequence YTTMRQLGDG…ASQALKHPYF (281 aa). ATP is bound by residues 10-18 and Lys33; that span reads LGDGTYGSV. Asp125 serves as the catalytic Proton acceptor. Thr157 carries the phosphothreonine; by autocatalysis modification. Tyr159 is subject to Phosphotyrosine; by autocatalysis. The interval 301–373 is disordered; the sequence is QTLHKQLQPP…HHKQPQTMFP (73 aa).

The protein belongs to the protein kinase superfamily. CMGC Ser/Thr protein kinase family. CDC2/CDKX subfamily. In terms of assembly, interacts with RP1. Interacts with AR and CDK20. Found in a complex containing MAK, AR and NCOA3. Interacts with FZR1 (via WD repeats). It depends on Mg(2+) as a cofactor. Autophosphorylated. Phosphorylated on serine and threonine residues. As to expression, expressed mainly in testicular cells at and after meiosis.

The protein resides in the nucleus. Its subcellular location is the cytoplasm. It is found in the cytoskeleton. It localises to the microtubule organizing center. The protein localises to the centrosome. The protein resides in the spindle. Its subcellular location is the midbody. It is found in the cell projection. It localises to the cilium. The protein localises to the photoreceptor outer segment. The protein resides in the photoreceptor inner segment. The enzyme catalyses L-seryl-[protein] + ATP = O-phospho-L-seryl-[protein] + ADP + H(+). It catalyses the reaction L-threonyl-[protein] + ATP = O-phospho-L-threonyl-[protein] + ADP + H(+). In terms of biological role, essential for the regulation of ciliary length and required for the long-term survival of photoreceptors. Could play an important function in spermatogenesis. Phosphorylates FZR1 in a cell cycle-dependent manner. Plays a role in the transcriptional coactivation of AR. The chain is Serine/threonine-protein kinase MAK (Mak) from Rattus norvegicus (Rat).